A 178-amino-acid chain; its full sequence is Large ribosomal subunit protein bL25 (178 aa).

It belongs to the bacterial ribosomal protein bL25 family. CTC subfamily. Part of the 50S ribosomal subunit; part of the 5S rRNA/L5/L18/L25 subcomplex. Contacts the 5S rRNA. Binds to the 5S rRNA independently of L5 and L18.

Functionally, this is one of the proteins that binds to the 5S RNA in the ribosome where it forms part of the central protuberance. In Helicobacter pylori (strain G27), this protein is Large ribosomal subunit protein bL25.